The primary structure comprises 142 residues: Small heat shock protein IbpB (142 aa).

Positions 26–137 (AGESQSFPPY…AAQRIAISER (112 aa)) constitute a sHSP domain.

This sequence belongs to the small heat shock protein (HSP20) family. In terms of assembly, homodimer. Forms homomultimers of about 100-150 subunits at optimal growth temperatures. Conformation changes to oligomers at high temperatures or high ionic concentrations. The decrease in size of the multimers is accompanied by an increase in chaperone activity.

The protein resides in the cytoplasm. Its function is as follows. Associates with aggregated proteins, together with IbpA, to stabilize and protect them from irreversible denaturation and extensive proteolysis during heat shock and oxidative stress. Aggregated proteins bound to the IbpAB complex are more efficiently refolded and reactivated by the ATP-dependent chaperone systems ClpB and DnaK/DnaJ/GrpE. Its activity is ATP-independent. In Shigella flexneri serotype 5b (strain 8401), this protein is Small heat shock protein IbpB.